A 257-amino-acid chain; its full sequence is Homeobox protein goosecoid (257 aa).

The homeobox DNA-binding region spans 160–219 (KRRHRTIFTDEQLEALENLFQETKYPDVGTREQLARKVHLREEKVEVWFKNRRAKWRRQK). Residues 213–257 (AKWRRQKRSSSEESENAEKWNKTSSSKASPEKREEEGKSDLDSDS) form a disordered region. Basic and acidic residues predominate over residues 241–257 (SPEKREEEGKSDLDSDS).

This sequence belongs to the paired homeobox family. Bicoid subfamily.

It localises to the nucleus. In terms of biological role, regulates chordin (CHRD). May play a role in spatial programing within discrete embryonic fields or lineage compartments during organogenesis. In concert with NKX3-2, plays a role in defining the structural components of the middle ear; required for the development of the entire tympanic ring. Probably involved in the regulatory networks that define neural crest cell fate specification and determine mesoderm cell lineages in mammals. The chain is Homeobox protein goosecoid (GSC) from Homo sapiens (Human).